Consider the following 833-residue polypeptide: 3-hydroxy-3-methylglutaryl-coenzyme A reductase (833 aa).

Transmembrane regions (helical) follow at residues phenylalanine 10–valine 32, tyrosine 91–serine 117, leucine 160–valine 180, and serine 301–phenylalanine 321. Positions glutamate 322–serine 419 are linker. Residues lysine 347 to threonine 374 are disordered. Over residues aspartate 354 to glutamate 365 the composition is skewed to polar residues. The interval histidine 420–leucine 833 is catalytic. Active-site charge relay system residues include glutamate 504 and lysine 635. N-linked (GlcNAc...) asparagine glycosylation occurs at asparagine 680. Aspartate 711 acts as the Charge relay system in catalysis. Residues asparagine 715 and asparagine 720 are each glycosylated (N-linked (GlcNAc...) asparagine). The active-site Proton donor is the histidine 809. N-linked (GlcNAc...) asparagine glycosylation is found at asparagine 813 and asparagine 825.

Belongs to the HMG-CoA reductase family.

The protein localises to the endoplasmic reticulum membrane. It catalyses the reaction (R)-mevalonate + 2 NADP(+) + CoA = (3S)-3-hydroxy-3-methylglutaryl-CoA + 2 NADPH + 2 H(+). It participates in metabolic intermediate biosynthesis; (R)-mevalonate biosynthesis; (R)-mevalonate from acetyl-CoA: step 3/3. With respect to regulation, the activity of HMG-CoA-reductase is suppressed by exogenous mevalonate. Synthesis of mevalonate for the production of non-sterol isoprenoids, which are essential for growth differentiation. The sequence is that of 3-hydroxy-3-methylglutaryl-coenzyme A reductase (HMGR) from Agrotis ipsilon (Black cutworm moth).